The sequence spans 86 residues: Anti-adapter protein IraP (86 aa).

A coiled-coil region spans residues methionine 1–methionine 36.

Belongs to the IraP family. Interacts with RssB.

The protein resides in the cytoplasm. In terms of biological role, inhibits RpoS proteolysis by regulating RssB activity, thereby increasing the stability of the sigma stress factor RpoS especially during phosphate starvation, but also in stationary phase and during nitrogen starvation. Its effect on RpoS stability is due to its interaction with RssB, which probably blocks the interaction of RssB with RpoS, and the consequent delivery of the RssB-RpoS complex to the ClpXP protein degradation pathway. This Shigella boydii serotype 18 (strain CDC 3083-94 / BS512) protein is Anti-adapter protein IraP.